The sequence spans 551 residues: Protein PNS1 (551 aa).

A disordered region spans residues 1–72 (MSAQEFYQGG…TGGQPVYQDT (72 aa)). Residues 1–94 (MSAQEFYQGG…RMNPRKRVND (94 aa)) are Cytoplasmic-facing. Low complexity predominate over residues 8-19 (QGGNQRGYQQQQ). Positions 45–63 (PPNYNMKPSQPYASTNPET) are enriched in polar residues. The chain crosses the membrane as a helical span at residues 95 to 115 (IIPLILFIAAVVGFAVVSGIA). The Extracellular portion of the chain corresponds to 116–147 (IHGFVQVNGLGGGMGDSSIGRTGSSITLDYHT). The helical transmembrane segment at 148–168 (VYLLLVVVALGLVIASLYLAA) threads the bilayer. Topologically, residues 169–177 (LRAFTKIIL) are cytoplasmic. The helical transmembrane segment at 178–198 (EVTLALTVILNIGICIYYFII) threads the bilayer. Over 199 to 200 (QY) the chain is Extracellular. A helical membrane pass occupies residues 201–221 (WSGAIIFLIIALVSVFFYWGM). The Cytoplasmic segment spans residues 222-244 (RKRIPLAKLLLQTTIDVTKHHPS). A helical membrane pass occupies residues 245 to 265 (VYVVVFIGLIIQAAVSVWYTF). The Extracellular portion of the chain corresponds to 266–307 (TCIAIYVKWTPGSAACSDGGCSSSKVAGLVFYATFSYLWLSQ). A helical membrane pass occupies residues 308–328 (VIGNVILCTLAGGVFGGWYYY). Residues 329–356 (GPRTPGGGVPKRASLLAFVRASTLSLGS) lie on the Cytoplasmic side of the membrane. The helical transmembrane segment at 357–377 (IAFGSLLVTILELLRLILQLF) threads the bilayer. Residues 378–386 (RQYEAGQGD) lie on the Extracellular side of the membrane. A helical transmembrane segment spans residues 387-407 (MIGSILICIAQCCIGCIQWMV). Residues 408 to 452 (EYFNKYAYIEIALYGKSYIPAAKDTWRLLKDRGIDALVNDSLVGT) lie on the Cytoplasmic side of the membrane. The helical transmembrane segment at 453–473 (ALMWGAYINGFLCAVLGYFYL) threads the bilayer. Over 474–488 (RFTHPAYNSDGQYSA) the chain is Extracellular. A helical transmembrane segment spans residues 489–509 (PVILFSFLIGLNESFTVGSAI). The Cytoplasmic segment spans residues 510–551 (DAGVSTIFVGLGEDPMVLAERSPGLFEMIRQVYPRVVQGVPH).

The protein belongs to the CTL (choline transporter-like) family.

The protein localises to the cell membrane. Functionally, probably involved in transport through the plasma membrane. This is Protein PNS1 (PNS1) from Cryptococcus neoformans var. neoformans serotype D (strain B-3501A) (Filobasidiella neoformans).